The following is a 270-amino-acid chain: Fluoride-specific ion channel FluC 2 (270 aa).

The next 4 helical transmembrane spans lie at 4–24 (IIILVVIGGAFGAMTREFIML), 35–55 (LDILVANVVACFLLGTVTALY), 67–87 (IIGTGMMGGVSTFSSFAYGSV), and 96–116 (AFLIAAAYVTVSVVAGYVAVL). Gly74 and Ser77 together coordinate Na(+).

Belongs to the fluoride channel Fluc/FEX (TC 1.A.43) family.

It is found in the cell inner membrane. It catalyses the reaction fluoride(in) = fluoride(out). Na(+) is not transported, but it plays an essential structural role and its presence is essential for fluoride channel function. Fluoride-specific ion channel. Important for reducing fluoride concentration in the cell, thus reducing its toxicity. This is Fluoride-specific ion channel FluC 2 from Brucella melitensis biotype 1 (strain ATCC 23456 / CCUG 17765 / NCTC 10094 / 16M).